The following is a 466-amino-acid chain: UDP-N-acetylmuramate--L-alanine ligase (466 aa).

ATP is bound at residue 114–120 (GTHGKTT).

This sequence belongs to the MurCDEF family.

The protein resides in the cytoplasm. The enzyme catalyses UDP-N-acetyl-alpha-D-muramate + L-alanine + ATP = UDP-N-acetyl-alpha-D-muramoyl-L-alanine + ADP + phosphate + H(+). It participates in cell wall biogenesis; peptidoglycan biosynthesis. Functionally, cell wall formation. This chain is UDP-N-acetylmuramate--L-alanine ligase, found in Mesorhizobium japonicum (strain LMG 29417 / CECT 9101 / MAFF 303099) (Mesorhizobium loti (strain MAFF 303099)).